A 315-amino-acid polypeptide reads, in one-letter code: 4-hydroxy-3-methylbut-2-enyl diphosphate reductase (315 aa).

Cysteine 12 contributes to the [4Fe-4S] cluster binding site. Residues histidine 41 and histidine 74 each contribute to the (2E)-4-hydroxy-3-methylbut-2-enyl diphosphate site. The dimethylallyl diphosphate site is built by histidine 41 and histidine 74. Positions 41 and 74 each coordinate isopentenyl diphosphate. Cysteine 96 serves as a coordination point for [4Fe-4S] cluster. Histidine 124 is a (2E)-4-hydroxy-3-methylbut-2-enyl diphosphate binding site. Histidine 124 provides a ligand contact to dimethylallyl diphosphate. Histidine 124 is a binding site for isopentenyl diphosphate. Catalysis depends on glutamate 126, which acts as the Proton donor. Residue threonine 167 coordinates (2E)-4-hydroxy-3-methylbut-2-enyl diphosphate. Cysteine 197 is a binding site for [4Fe-4S] cluster. Residues serine 225, serine 226, asparagine 227, and serine 269 each coordinate (2E)-4-hydroxy-3-methylbut-2-enyl diphosphate. Residues serine 225, serine 226, asparagine 227, and serine 269 each coordinate dimethylallyl diphosphate. Isopentenyl diphosphate is bound by residues serine 225, serine 226, asparagine 227, and serine 269.

This sequence belongs to the IspH family. In terms of assembly, homodimer. [4Fe-4S] cluster is required as a cofactor.

It catalyses the reaction isopentenyl diphosphate + 2 oxidized [2Fe-2S]-[ferredoxin] + H2O = (2E)-4-hydroxy-3-methylbut-2-enyl diphosphate + 2 reduced [2Fe-2S]-[ferredoxin] + 2 H(+). The enzyme catalyses dimethylallyl diphosphate + 2 oxidized [2Fe-2S]-[ferredoxin] + H2O = (2E)-4-hydroxy-3-methylbut-2-enyl diphosphate + 2 reduced [2Fe-2S]-[ferredoxin] + 2 H(+). It participates in isoprenoid biosynthesis; dimethylallyl diphosphate biosynthesis; dimethylallyl diphosphate from (2E)-4-hydroxy-3-methylbutenyl diphosphate: step 1/1. The protein operates within isoprenoid biosynthesis; isopentenyl diphosphate biosynthesis via DXP pathway; isopentenyl diphosphate from 1-deoxy-D-xylulose 5-phosphate: step 6/6. Its function is as follows. Catalyzes the conversion of 1-hydroxy-2-methyl-2-(E)-butenyl 4-diphosphate (HMBPP) into a mixture of isopentenyl diphosphate (IPP) and dimethylallyl diphosphate (DMAPP). Acts in the terminal step of the DOXP/MEP pathway for isoprenoid precursor biosynthesis. The protein is 4-hydroxy-3-methylbut-2-enyl diphosphate reductase of Wigglesworthia glossinidia brevipalpis.